The following is a 627-amino-acid chain: Phosphomethylpyrimidine synthase (627 aa).

Residues 1–21 are compositionally biased toward polar residues; the sequence is MSAQQQKNLSESAQVDQQSVQ. The segment at 1–32 is disordered; sequence MSAQQQKNLSESAQVDQQSVQPFPRSQKVYVQ. Residues asparagine 231, methionine 260, tyrosine 289, histidine 325, 345–347, 386–389, and glutamate 425 contribute to the substrate site; these read SRG and DGLR. Histidine 429 is a binding site for Zn(2+). Residue tyrosine 452 coordinates substrate. Residue histidine 493 coordinates Zn(2+). 3 residues coordinate [4Fe-4S] cluster: cysteine 573, cysteine 576, and cysteine 581.

Belongs to the ThiC family. As to quaternary structure, homodimer. The cofactor is [4Fe-4S] cluster.

The enzyme catalyses 5-amino-1-(5-phospho-beta-D-ribosyl)imidazole + S-adenosyl-L-methionine = 4-amino-2-methyl-5-(phosphooxymethyl)pyrimidine + CO + 5'-deoxyadenosine + formate + L-methionine + 3 H(+). It functions in the pathway cofactor biosynthesis; thiamine diphosphate biosynthesis. Catalyzes the synthesis of the hydroxymethylpyrimidine phosphate (HMP-P) moiety of thiamine from aminoimidazole ribotide (AIR) in a radical S-adenosyl-L-methionine (SAM)-dependent reaction. This is Phosphomethylpyrimidine synthase from Ectopseudomonas mendocina (strain ymp) (Pseudomonas mendocina).